The following is a 236-amino-acid chain: Phosphoribosylaminoimidazole-succinocarboxamide synthase (236 aa).

Belongs to the SAICAR synthetase family.

It carries out the reaction 5-amino-1-(5-phospho-D-ribosyl)imidazole-4-carboxylate + L-aspartate + ATP = (2S)-2-[5-amino-1-(5-phospho-beta-D-ribosyl)imidazole-4-carboxamido]succinate + ADP + phosphate + 2 H(+). It participates in purine metabolism; IMP biosynthesis via de novo pathway; 5-amino-1-(5-phospho-D-ribosyl)imidazole-4-carboxamide from 5-amino-1-(5-phospho-D-ribosyl)imidazole-4-carboxylate: step 1/2. The chain is Phosphoribosylaminoimidazole-succinocarboxamide synthase from Pseudomonas putida (strain ATCC 700007 / DSM 6899 / JCM 31910 / BCRC 17059 / LMG 24140 / F1).